The chain runs to 256 residues: Type III pantothenate kinase 1 (256 aa).

Residue 6-13 (DIGNSHIF) participates in ATP binding. 107–110 (GADR) contacts substrate. The Proton acceptor role is filled by aspartate 109. Aspartate 130 lines the K(+) pocket. Residue threonine 133 participates in ATP binding. Threonine 185 provides a ligand contact to substrate.

This sequence belongs to the type III pantothenate kinase family. As to quaternary structure, homodimer. NH4(+) is required as a cofactor. It depends on K(+) as a cofactor.

It localises to the cytoplasm. It carries out the reaction (R)-pantothenate + ATP = (R)-4'-phosphopantothenate + ADP + H(+). The protein operates within cofactor biosynthesis; coenzyme A biosynthesis; CoA from (R)-pantothenate: step 1/5. Functionally, catalyzes the phosphorylation of pantothenate (Pan), the first step in CoA biosynthesis. This chain is Type III pantothenate kinase 1, found in Francisella tularensis subsp. holarctica (strain LVS).